The primary structure comprises 287 residues: Undecaprenyl-diphosphatase (287 aa).

The next 6 membrane-spanning stretches (helical) occupy residues 50–70, 99–119, 128–148, 206–226, 231–251, and 263–283; these read PGVS…IAYF, IAMA…KLFW, LRSV…LAVA, FLLG…DALA, AGPL…WLAI, and TWLF…WWSI.

Belongs to the UppP family.

Its subcellular location is the cell inner membrane. The enzyme catalyses di-trans,octa-cis-undecaprenyl diphosphate + H2O = di-trans,octa-cis-undecaprenyl phosphate + phosphate + H(+). Functionally, catalyzes the dephosphorylation of undecaprenyl diphosphate (UPP). Confers resistance to bacitracin. The sequence is that of Undecaprenyl-diphosphatase from Parasynechococcus marenigrum (strain WH8102).